Consider the following 147-residue polypeptide: Hemoglobin subunit beta-1 (147 aa).

One can recognise a Globin domain in the interval 3-147 (NLTAKERQLI…IADALGKGYH (145 aa)). Residues His64 and His93 each coordinate heme b.

The protein belongs to the globin family. In terms of assembly, heterotetramer of two alpha chains and two beta chains. As to expression, red blood cells.

In terms of biological role, involved in oxygen transport from the lung to the various peripheral tissues. In Xenopus tropicalis (Western clawed frog), this protein is Hemoglobin subunit beta-1 (hbb1).